We begin with the raw amino-acid sequence, 241 residues long: Demethylmenaquinone methyltransferase (241 aa).

S-adenosyl-L-methionine-binding positions include threonine 68, aspartate 88, and 114–115 (DA).

This sequence belongs to the class I-like SAM-binding methyltransferase superfamily. MenG/UbiE family.

The catalysed reaction is a 2-demethylmenaquinol + S-adenosyl-L-methionine = a menaquinol + S-adenosyl-L-homocysteine + H(+). The protein operates within quinol/quinone metabolism; menaquinone biosynthesis; menaquinol from 1,4-dihydroxy-2-naphthoate: step 2/2. In terms of biological role, methyltransferase required for the conversion of demethylmenaquinol (DMKH2) to menaquinol (MKH2). This Deinococcus radiodurans (strain ATCC 13939 / DSM 20539 / JCM 16871 / CCUG 27074 / LMG 4051 / NBRC 15346 / NCIMB 9279 / VKM B-1422 / R1) protein is Demethylmenaquinone methyltransferase.